We begin with the raw amino-acid sequence, 332 residues long: UPF0194 membrane protein YbhG (332 aa).

The signal sequence occupies residues 1 to 16; it reads MMKKPVVIGLAVVVLA. Residues 108–211 adopt a coiled-coil conformation; sequence EEIAQAAAAV…LQDSTLVAPS (104 aa).

It belongs to the UPF0194 family.

It is found in the periplasm. The polypeptide is UPF0194 membrane protein YbhG (Escherichia coli O6:H1 (strain CFT073 / ATCC 700928 / UPEC)).